Reading from the N-terminus, the 145-residue chain is Cell wall synthesis protein CwsA (145 aa).

Residues 104–124 (WIFAGIAAAILAGGAVAFSIV) form a helical membrane-spanning segment.

It belongs to the CwsA family.

It localises to the cell membrane. Functionally, required for regulated cell division, cell wall synthesis and the maintenance of cell shape. This chain is Cell wall synthesis protein CwsA, found in Mycobacterium bovis (strain ATCC BAA-935 / AF2122/97).